A 614-amino-acid chain; its full sequence is Cathepsin F (614 aa).

A signal peptide spans 1-20; it reads MRLFAAATVALVLLLGQAAG. The propeptide at 21 to 393 is activation peptide; it reads EELAEERAGQ…AAVVPAYHGE (373 aa). The interval 25 to 50 is disordered; the sequence is EERAGQAQGDAESTESSETTTDQAVS. The span at 29 to 45 shows a compositional bias: low complexity; that stretch reads GQAQGDAESTESSETTT. N-linked (GlcNAc...) asparagine glycosylation is present at N151. Cystine bridges form between C415–C456 and C449–C489. C418 is an active-site residue. N492 and N510 each carry an N-linked (GlcNAc...) asparagine glycan. A disulfide bridge links C548 with C602. Residues H555 and N581 contribute to the active site.

Belongs to the peptidase C1 family.

The enzyme catalyses The recombinant enzyme cleaves synthetic substrates with Phe and Leu (better than Val) in P2, with high specificity constant (kcat/Km) comparable to that of cathepsin L.. In terms of biological role, may have a role in autophagic cell death. This chain is Cathepsin F, found in Drosophila melanogaster (Fruit fly).